Reading from the N-terminus, the 114-residue chain is Probable non-functional T cell receptor beta variable 6-7 (114 aa).

Positions 1–21 (MSLGLLCCVAFSLLWAGPMNA) are cleaved as a signal peptide. The region spanning 22-114 (GVTQTPKFHV…TSVYFCASSY (93 aa)) is the Ig-like domain. Cys42 and Cys110 are disulfide-bonded. Asn84 carries N-linked (GlcNAc...) asparagine glycosylation.

As to quaternary structure, alpha-beta TR is a heterodimer composed of an alpha and beta chain; disulfide-linked. The alpha-beta TR is associated with the transmembrane signaling CD3 coreceptor proteins to form the TR-CD3 (TcR or TCR). The assembly of alpha-beta TR heterodimers with CD3 occurs in the endoplasmic reticulum where a single alpha-beta TR heterodimer associates with one CD3D-CD3E heterodimer, one CD3G-CD3E heterodimer and one CD247 homodimer forming a stable octameric structure. CD3D-CD3E and CD3G-CD3E heterodimers preferentially associate with TR alpha and TR beta chains, respectively. The association of the CD247 homodimer is the last step of TcR assembly in the endoplasmic reticulum and is required for transport to the cell surface.

It is found in the cell membrane. Functionally, probable non-functional open reading frame (ORF) of V region of the variable domain of T cell receptor (TR) beta chain. Non-functional ORF generally cannot participate in the synthesis of a productive T cell receptor (TR) chain due to altered V-(D)-J or switch recombination and/or splicing site (at mRNA level) and/or conserved amino acid change (protein level). Alpha-beta T cell receptors are antigen specific receptors which are essential to the immune response and are present on the cell surface of T lymphocytes. Recognize peptide-major histocompatibility (MH) (pMH) complexes that are displayed by antigen presenting cells (APC), a prerequisite for efficient T cell adaptive immunity against pathogens. Binding of alpha-beta TR to pMH complex initiates TR-CD3 clustering on the cell surface and intracellular activation of LCK that phosphorylates the ITAM motifs of CD3G, CD3D, CD3E and CD247 enabling the recruitment of ZAP70. In turn ZAP70 phosphorylates LAT, which recruits numerous signaling molecules to form the LAT signalosome. The LAT signalosome propagates signal branching to three major signaling pathways, the calcium, the mitogen-activated protein kinase (MAPK) kinase and the nuclear factor NF-kappa-B (NF-kB) pathways, leading to the mobilization of transcription factors that are critical for gene expression and essential for T cell growth and differentiation. The T cell repertoire is generated in the thymus, by V-(D)-J rearrangement. This repertoire is then shaped by intrathymic selection events to generate a peripheral T cell pool of self-MH restricted, non-autoaggressive T cells. Post-thymic interaction of alpha-beta TR with the pMH complexes shapes TR structural and functional avidity. This chain is Probable non-functional T cell receptor beta variable 6-7, found in Homo sapiens (Human).